A 239-amino-acid chain; its full sequence is RNA polymerase sigma-E factor (239 aa).

The propeptide at 1 to 29 is removed by SpoIIGA; sequence MKKLKLRLTHLWYKLLMKLGLKSDEVYYI. The Polymerase core binding motif lies at 86 to 99; it reads DLISIGTIGLIKAV. The H-T-H motif DNA-binding region spans 206-225; sequence QKDVADMMGISQSYISRLEK.

Belongs to the sigma-70 factor family. In terms of processing, proteolytically cleaved in the N-terminus by SpoIIGA to yield the active peptide.

Its function is as follows. Sigma factors are initiation factors that promote the attachment of RNA polymerase to specific initiation sites and are then released. This sigma factor is responsible for the expression of sporulation specific genes. In Bacillus subtilis (strain 168), this protein is RNA polymerase sigma-E factor (sigE).